The primary structure comprises 83 residues: ATP synthase subunit c, chloroplastic (83 aa).

The next 2 helical transmembrane spans lie at 4 to 24 (IISA…AIGP) and 57 to 77 (LAFM…LLFA).

Belongs to the ATPase C chain family. In terms of assembly, F-type ATPases have 2 components, F(1) - the catalytic core - and F(0) - the membrane proton channel. F(1) has five subunits: alpha(3), beta(3), gamma(1), delta(1), epsilon(1). F(0) has four main subunits: a(1), b(1), b'(1) and c(10-14). The alpha and beta chains form an alternating ring which encloses part of the gamma chain. F(1) is attached to F(0) by a central stalk formed by the gamma and epsilon chains, while a peripheral stalk is formed by the delta, b and b' chains.

It is found in the plastid. The protein localises to the chloroplast thylakoid membrane. In terms of biological role, f(1)F(0) ATP synthase produces ATP from ADP in the presence of a proton or sodium gradient. F-type ATPases consist of two structural domains, F(1) containing the extramembraneous catalytic core and F(0) containing the membrane proton channel, linked together by a central stalk and a peripheral stalk. During catalysis, ATP synthesis in the catalytic domain of F(1) is coupled via a rotary mechanism of the central stalk subunits to proton translocation. Functionally, key component of the F(0) channel; it plays a direct role in translocation across the membrane. A homomeric c-ring of between 10-14 subunits forms the central stalk rotor element with the F(1) delta and epsilon subunits. This chain is ATP synthase subunit c, chloroplastic, found in Galdieria sulphuraria (Red alga).